Reading from the N-terminus, the 138-residue chain is Small ribosomal subunit protein uS9c (138 aa).

This sequence belongs to the universal ribosomal protein uS9 family.

The protein resides in the plastid. Its subcellular location is the chloroplast. The chain is Small ribosomal subunit protein uS9c (rps9) from Phaeodactylum tricornutum (strain CCAP 1055/1).